Here is a 746-residue protein sequence, read N- to C-terminus: Ferric enterobactin receptor (746 aa).

The signal sequence occupies residues 1–25 (MSSRALPAVPFLLLSSCLLANAVHA). The short motif at 39 to 44 (QTVVAT) is the TonB box element. A TBDR plug domain is found at 47 to 174 (EETKQAPGVS…AGGVVNIITK (128 aa)). Disordered regions lie at residues 82 to 102 (VNLT…IDIR), 235 to 254 (GHES…GREG), and 397 to 424 (QKLD…KNRS). A compositionally biased stretch (polar residues) spans 84–98 (LTGNSSSGQRGNNRQ). Positions 179–746 (ETHGNLSVYS…TFYTSLTASF (568 aa)) constitute a TBDR beta-barrel domain. Over residues 402–411 (PSSNTQNTEE) the composition is skewed to polar residues. Positions 729–746 (ATYNEPGRTFYTSLTASF) match the TonB C-terminal box motif.

Belongs to the TonB-dependent receptor family.

It is found in the cell outer membrane. In terms of biological role, specific receptor for the siderophore ferric enterobactin. The chain is Ferric enterobactin receptor (pfeA) from Pseudomonas aeruginosa (strain ATCC 15692 / DSM 22644 / CIP 104116 / JCM 14847 / LMG 12228 / 1C / PRS 101 / PAO1).